Consider the following 420-residue polypeptide: UDP-N-acetylmuramoylalanine--D-glutamate ligase (420 aa).

109–115 (GSAGKTT) provides a ligand contact to ATP.

Belongs to the MurCDEF family.

It localises to the cytoplasm. It carries out the reaction UDP-N-acetyl-alpha-D-muramoyl-L-alanine + D-glutamate + ATP = UDP-N-acetyl-alpha-D-muramoyl-L-alanyl-D-glutamate + ADP + phosphate + H(+). The protein operates within cell wall biogenesis; peptidoglycan biosynthesis. In terms of biological role, cell wall formation. Catalyzes the addition of glutamate to the nucleotide precursor UDP-N-acetylmuramoyl-L-alanine (UMA). The chain is UDP-N-acetylmuramoylalanine--D-glutamate ligase from Chlamydia abortus (strain DSM 27085 / S26/3) (Chlamydophila abortus).